The primary structure comprises 316 residues: 4-hydroxy-3-methylbut-2-enyl diphosphate reductase (316 aa).

Residue Cys-12 participates in [4Fe-4S] cluster binding. (2E)-4-hydroxy-3-methylbut-2-enyl diphosphate contacts are provided by His-41 and His-74. His-41 and His-74 together coordinate dimethylallyl diphosphate. Isopentenyl diphosphate-binding residues include His-41 and His-74. Residue Cys-96 participates in [4Fe-4S] cluster binding. His-124 contributes to the (2E)-4-hydroxy-3-methylbut-2-enyl diphosphate binding site. His-124 contacts dimethylallyl diphosphate. Isopentenyl diphosphate is bound at residue His-124. Glu-126 (proton donor) is an active-site residue. Thr-167 serves as a coordination point for (2E)-4-hydroxy-3-methylbut-2-enyl diphosphate. Cys-197 provides a ligand contact to [4Fe-4S] cluster. (2E)-4-hydroxy-3-methylbut-2-enyl diphosphate-binding residues include Ser-225, Ser-226, Asn-227, and Ser-269. Residues Ser-225, Ser-226, Asn-227, and Ser-269 each coordinate dimethylallyl diphosphate. 4 residues coordinate isopentenyl diphosphate: Ser-225, Ser-226, Asn-227, and Ser-269.

It belongs to the IspH family. Homodimer. The cofactor is [4Fe-4S] cluster.

It catalyses the reaction isopentenyl diphosphate + 2 oxidized [2Fe-2S]-[ferredoxin] + H2O = (2E)-4-hydroxy-3-methylbut-2-enyl diphosphate + 2 reduced [2Fe-2S]-[ferredoxin] + 2 H(+). It carries out the reaction dimethylallyl diphosphate + 2 oxidized [2Fe-2S]-[ferredoxin] + H2O = (2E)-4-hydroxy-3-methylbut-2-enyl diphosphate + 2 reduced [2Fe-2S]-[ferredoxin] + 2 H(+). Its pathway is isoprenoid biosynthesis; dimethylallyl diphosphate biosynthesis; dimethylallyl diphosphate from (2E)-4-hydroxy-3-methylbutenyl diphosphate: step 1/1. The protein operates within isoprenoid biosynthesis; isopentenyl diphosphate biosynthesis via DXP pathway; isopentenyl diphosphate from 1-deoxy-D-xylulose 5-phosphate: step 6/6. Catalyzes the conversion of 1-hydroxy-2-methyl-2-(E)-butenyl 4-diphosphate (HMBPP) into a mixture of isopentenyl diphosphate (IPP) and dimethylallyl diphosphate (DMAPP). Acts in the terminal step of the DOXP/MEP pathway for isoprenoid precursor biosynthesis. The protein is 4-hydroxy-3-methylbut-2-enyl diphosphate reductase of Salmonella agona (strain SL483).